Consider the following 410-residue polypeptide: Acetate kinase (410 aa).

N7 is a binding site for Mg(2+). Residue K14 coordinates ATP. R88 contributes to the substrate binding site. The Proton donor/acceptor role is filled by D145. ATP contacts are provided by residues 203 to 207 (HAGNG), 278 to 280 (DTR), and 326 to 330 (GIGEN). E379 is a binding site for Mg(2+).

The protein belongs to the acetokinase family. In terms of assembly, homodimer. Mg(2+) serves as cofactor. The cofactor is Mn(2+).

It is found in the cytoplasm. It carries out the reaction acetate + ATP = acetyl phosphate + ADP. Its pathway is metabolic intermediate biosynthesis; acetyl-CoA biosynthesis; acetyl-CoA from acetate: step 1/2. Catalyzes the formation of acetyl phosphate from acetate and ATP. Can also catalyze the reverse reaction. This Aster yellows witches'-broom phytoplasma (strain AYWB) protein is Acetate kinase.